The primary structure comprises 242 residues: Venom nerve growth factor 1 (242 aa).

Positions 1 to 18 (MSMLCYTLIIAFLIGIWA) are cleaved as a signal peptide. Residues 19–125 (APQSEDNVPL…ALNRNIQAKR (107 aa)) constitute a propeptide that is removed on maturation. Disulfide bonds link Cys-139–Cys-203, Cys-181–Cys-231, and Cys-191–Cys-233.

It belongs to the NGF-beta family. Homodimer; non-covalently linked. In terms of tissue distribution, expressed by the venom gland.

The protein localises to the secreted. Functionally, nerve growth factor is important for the development and maintenance of the sympathetic and sensory nervous systems. It stimulates division and differentiation of sympathetic and embryonic sensory neurons as well as basal forebrain cholinergic neurons in the brain. Its relevance in the snake venom is not clear. However, it has been shown to inhibit metalloproteinase-dependent proteolysis of platelet glycoprotein Ib alpha, suggesting a metalloproteinase inhibition to prevent metalloprotease autodigestion and/or protection against prey proteases. Binds a lipid between the two protein chains in the homodimer. The lipid-bound form promotes histamine relase from mouse mast cells, contrary to the lipid-free form. The protein is Venom nerve growth factor 1 of Pseudechis australis (Mulga snake).